Consider the following 247-residue polypeptide: Transcription factor bHLH92 (247 aa).

The region spanning Glu-85 to Leu-134 is the bHLH domain.

As to quaternary structure, homodimer.

The protein resides in the nucleus. The protein is Transcription factor bHLH92 (BHLH92) of Arabidopsis thaliana (Mouse-ear cress).